The sequence spans 1893 residues: CDK5 regulatory subunit-associated protein 2 (1893 aa).

The interval 51–94 (TVSPTRARNMKDFENQITELKKENFNLKLRIYFLEERMQQEFHG) is CM1 motif; interacts with the gTuRC. Residues 58-196 (RNMKDFENQI…TEKALRLRLE (139 aa)) form an interaction with NCKAP5L region. A Phosphoserine modification is found at S547. An interaction with MAPRE1 region spans residues 926-1208 (PGITNREAKK…LENLKQQLEE (283 aa)). At T1001 the chain carries Phosphothreonine. Disordered stretches follow at residues 1015–1071 (AAYQ…NPED) and 1084–1105 (SKSQ…SINT). The span at 1034-1048 (WRDKEMDSDQQRSYE) shows a compositional bias: basic and acidic residues. S1238 carries the post-translational modification Phosphoserine. The tract at residues 1347–1381 (LPESPEPSASHALSDYETSEKSFFSRDQKQDNETE) is disordered. Over residues 1364 to 1381 (TSEKSFFSRDQKQDNETE) the composition is skewed to basic and acidic residues. Position 1490 is a phosphoserine (S1490). Composition is skewed to basic and acidic residues over residues 1500 to 1519 (SVKE…ERHN) and 1651 to 1661 (PDKHDGDKYPM). Disordered regions lie at residues 1500-1521 (SVKE…HNQQ), 1646-1706 (EVPL…ATST), and 1754-1774 (QTQE…PHPA). S1663 and S1666 each carry phosphoserine. 2 stretches are compositionally biased toward polar residues: residues 1663–1706 (SDNS…ATST) and 1754–1766 (QTQE…SQEL). The interaction with CDK5R1 stretch occupies residues 1726 to 1768 (HVLGLIEDYEALLKQISQGQRLLAEMDIQTQEAPSSTSQELGT). Residues 1726-1893 (HVLGLIEDYE…GTCSPSRPGS (168 aa)) form an interaction with PCNT and AKAP9 region. The segment at 1861 to 1870 (VVTHKILRKA) is required for centrosomal attachment, Golgi localization and CALM1 interaction. S1893 bears the Phosphoserine mark.

In terms of assembly, homodimer. Interacts with CDK5R1 (p35 form). CDK5RAP1, CDK5RAP2 and CDK5RAP3 show competitive binding to CDK5R1. May form a complex with CDK5R1 and CDK5. Interacts with pericentrin/PCNT; the interaction is leading to centrosomal and Golgi localization of CDK5RAP2 and PCNT. Interacts with AKAP9; the interaction targets CDK5RAP2 and AKAP9 to Golgi apparatus. Interacts with MAPRE1; the interaction is direct and targets CDK5RAP2 and EB1/MAPRE1 to microtubule plus ends. Interacts with TUBG1; the interaction is leading to the centrosomal localization of CDK5RAP2 and TUBG1. Interacts with TUBGCP3. Interacts with CALM1. Interacts with CDC20. Interacts with CEP68; degradation of CEP68 in early mitosis leads to removal of CDK5RAP2 from the centrosome which promotes centriole disengagement and subsequent centriole separation. Interacts with NCKAP5L. Forms a pericentrosomal complex with AKAP9, MAPRE1 and PDE4DIP isoform 13/MMG8/SMYLE; within this complex, MAPRE1 binding to CDK5RAP2 may be mediated by PDE4DIP. Interacts with LGALS3BP; this interaction may connect the pericentrosomal complex to the gamma-tubulin ring complex (gTuRC) to promote microtubule assembly and acetylation. Interacts with CCDC66. Associates (via CM1 motif) with TUBGCP2 of the gTuRC; the interaction plays a role in gTuRC activation. Phosphorylated in vitro by CDK5. As to expression, widely expressed. Expressed in heart, brain, placenta, lung, liver, skeletal muscle, kidney and pancreas.

It localises to the cytoplasm. The protein resides in the cytoskeleton. Its subcellular location is the microtubule organizing center. It is found in the centrosome. The protein localises to the golgi apparatus. In terms of biological role, potential regulator of CDK5 activity via its interaction with CDK5R1. Negative regulator of centriole disengagement (licensing) which maintains centriole engagement and cohesion. Involved in regulation of mitotic spindle orientation. Plays a role in the spindle checkpoint activation by acting as a transcriptional regulator of both BUBR1 and MAD2 promoter. Together with EB1/MAPRE1, may promote microtubule polymerization, bundle formation, growth and dynamics at the plus ends. Regulates centrosomal maturation by recruitment of the gamma-tubulin ring complex (gTuRC) onto centrosomes. In complex with PDE4DIP isoform 13/MMG8/SMYLE, MAPRE1 and AKAP9, contributes to microtubules nucleation and extension from the centrosome to the cell periphery. Required for the recruitment of AKAP9 to centrosomes. Plays a role in neurogenesis. This chain is CDK5 regulatory subunit-associated protein 2 (CDK5RAP2), found in Homo sapiens (Human).